Consider the following 393-residue polypeptide: Probable alpha-1,6-mannosyltransferase MNN10 (393 aa).

At 1–52 the chain is on the cytoplasmic side; sequence MSSVPYNSQLPISNHLEYDEDEKKSRGSKLGLKYKMIYWRKTLCSSLARWRK. A helical; Signal-anchor for type II membrane protein transmembrane segment spans residues 53–73; the sequence is LILLISLALFLFIWISDSTIS. Residues 74 to 393 lie on the Lumenal side of the membrane; that stretch reads RNPSTTSFQG…RKWYTRFFFP (320 aa). The disordered stretch occupies residues 77–97; the sequence is STTSFQGQNSNDNKLSNTGSS.

This sequence belongs to the glycosyltransferase 34 family. Component of the M-Pol II complex composed of ANP1, MNN9, MNN10, MNN11 and HOC1.

It localises to the endoplasmic reticulum membrane. The protein resides in the golgi apparatus. Its subcellular location is the cis-Golgi network membrane. Its function is as follows. Required for polarized growth and efficient budding. The M-Pol II complex possesses alpha-1,6-mannosyltransferase activity and is probably involved in the elongation of the mannan backbone of N-linked glycans on cell wall and periplasmic proteins. The polypeptide is Probable alpha-1,6-mannosyltransferase MNN10 (MNN10) (Saccharomyces cerevisiae (strain ATCC 204508 / S288c) (Baker's yeast)).